Consider the following 260-residue polypeptide: Proteasome subunit alpha (260 aa).

It belongs to the peptidase T1A family. As to quaternary structure, the 20S proteasome core is composed of 14 alpha and 14 beta subunits that assemble into four stacked heptameric rings, resulting in a barrel-shaped structure. The two inner rings, each composed of seven catalytic beta subunits, are sandwiched by two outer rings, each composed of seven alpha subunits. The catalytic chamber with the active sites is on the inside of the barrel. Has a gated structure, the ends of the cylinder being occluded by the N-termini of the alpha-subunits. Is capped at one or both ends by the proteasome regulatory ATPase, PAN.

It localises to the cytoplasm. With respect to regulation, the formation of the proteasomal ATPase PAN-20S proteasome complex, via the docking of the C-termini of PAN into the intersubunit pockets in the alpha-rings, triggers opening of the gate for substrate entry. Interconversion between the open-gate and close-gate conformations leads to a dynamic regulation of the 20S proteasome proteolysis activity. Its function is as follows. Component of the proteasome core, a large protease complex with broad specificity involved in protein degradation. The polypeptide is Proteasome subunit alpha (Thermococcus sp. (strain JCM 11816 / KS-1)).